Consider the following 902-residue polypeptide: Cytosolic 10-formyltetrahydrofolate dehydrogenase (902 aa).

The interval 1-310 is hydrolase domain; the sequence is MKIAVIGQSL…PASQFFKGSA (310 aa). The residue at position 9 (Ser9) is a Phosphoserine. Lys38 carries the post-translational modification N6-succinyllysine. 88–90 serves as a coordination point for (6R)-10-formyltetrahydrofolate; sequence QFI. Residue His106 is the Proton donor of the active site. Residue Asp142 participates in (6R)-10-formyltetrahydrofolate binding. Residues 318–395 enclose the Carrier domain; it reads EEELATAEAV…DFIQLLVRKL (78 aa). Position 354 is an O-(pantetheine 4'-phosphoryl)serine (Ser354). The segment at 417 to 902 is aldehyde dehydrogenase domain; sequence TLQMPYQLFI…LRIKTVTFEY (486 aa). Residues 571–573 and 597–600 contribute to the NADP(+) site; these read IPW and KPAQ. Ser629 and Ser631 each carry phosphoserine. NADP(+) contacts are provided by residues 630-635 and 650-651; these read GSLVGQ and GS. Residue Lys660 is modified to N6-succinyllysine. Glu673 serves as the catalytic Proton acceptor. 673–674 serves as a coordination point for NADP(+); it reads EL. Cys707 (proton donor) is an active-site residue. Lys757 serves as a coordination point for NADP(+). Position 767 is an N6-succinyllysine (Lys767). 804–806 provides a ligand contact to NADP(+); the sequence is ESF. At Ser825 the chain carries Phosphoserine. Lys882 bears the N6-acetyllysine mark.

It in the N-terminal section; belongs to the GART family. The protein in the C-terminal section; belongs to the aldehyde dehydrogenase family. ALDH1L subfamily. In terms of assembly, homotetramer. Post-translationally, phosphopantetheinylation at Ser-354 by AASDHPPT is required for the formyltetrahydrofolate dehydrogenase activity. Highly expressed in liver (at protein level). Also expressed in pancreas, brain and lung (at protein level).

It localises to the cytoplasm. The protein localises to the cytosol. It catalyses the reaction (6R)-10-formyltetrahydrofolate + NADP(+) + H2O = (6S)-5,6,7,8-tetrahydrofolate + CO2 + NADPH + H(+). In terms of biological role, cytosolic 10-formyltetrahydrofolate dehydrogenase that catalyzes the NADP(+)-dependent conversion of 10-formyltetrahydrofolate to tetrahydrofolate and carbon dioxide. May also have an NADP(+)-dependent aldehyde dehydrogenase activity towards formaldehyde, acetaldehyde, propionaldehyde, and benzaldehyde. The sequence is that of Cytosolic 10-formyltetrahydrofolate dehydrogenase from Mus musculus (Mouse).